A 184-amino-acid polypeptide reads, in one-letter code: Probable RNA 2'-phosphotransferase (184 aa).

Belongs to the KptA/TPT1 family.

Its function is as follows. Removes the 2'-phosphate from RNA via an intermediate in which the phosphate is ADP-ribosylated by NAD followed by a presumed transesterification to release the RNA and generate ADP-ribose 1''-2''-cyclic phosphate (APPR&gt;P). May function as an ADP-ribosylase. The chain is Probable RNA 2'-phosphotransferase from Escherichia coli O6:K15:H31 (strain 536 / UPEC).